Reading from the N-terminus, the 480-residue chain is Protein disulfide-isomerase 5-4 (480 aa).

N-linked (GlcNAc...) asparagine glycosylation is found at Asn74 and Asn99. Positions 120–263 (FHAGEVLSLI…LVKMVVSLVE (144 aa)) constitute a Thioredoxin domain. Active-site nucleophile residues include Cys170 and Cys173. A disulfide bond links Cys170 and Cys173. Residues Asn280, Asn326, and Asn376 are each glycosylated (N-linked (GlcNAc...) asparagine). Residues 439–459 (FSHFITNVCAIIGGVFTVAGI) traverse the membrane as a helical segment.

It belongs to the protein disulfide isomerase family. In terms of tissue distribution, widely expressed.

The protein resides in the membrane. Functionally, acts as a protein-folding catalyst that interacts with nascent polypeptides to catalyze the formation, isomerization, and reduction or oxidation of disulfide bonds. The protein is Protein disulfide-isomerase 5-4 (PDIL5-4) of Arabidopsis thaliana (Mouse-ear cress).